The chain runs to 1615 residues: Mediator of RNA polymerase II transcription subunit 23 (1615 aa).

2 disordered regions span residues 40 to 67 (RQKP…DLPP) and 1230 to 1270 (SSSS…NASE). The segment covering 41 to 51 (QKPDESLRDPP) has biased composition (basic and acidic residues). The segment covering 1230–1241 (SSSSNCSSRSGS) has biased composition (low complexity).

Belongs to the Mediator complex subunit 23 family. As to quaternary structure, component of the Mediator complex.

The protein localises to the nucleus. In terms of biological role, component of the Mediator complex, a coactivator involved in the regulated transcription of nearly all RNA polymerase II-dependent genes. Mediator functions as a bridge to convey information from gene-specific regulatory proteins to the basal RNA polymerase II transcription machinery. The Mediator complex, having a compact conformation in its free form, is recruited to promoters by direct interactions with regulatory proteins and serves for the assembly of a functional preinitiation complex with RNA polymerase II and the general transcription factors. The sequence is that of Mediator of RNA polymerase II transcription subunit 23 (MED23) from Arabidopsis thaliana (Mouse-ear cress).